The chain runs to 1057 residues: Carbamoyl phosphate synthase large chain (1057 aa).

The carboxyphosphate synthetic domain stretch occupies residues 1–401 (MPKRNDIKTI…SLLKAIRSLE (401 aa)). ATP-binding residues include R129, R169, G175, G176, K208, I210, E215, G241, I242, H243, Q284, and E298. The region spanning 133–327 (RTLMNYLNVP…IAKLAAKIAV (195 aa)) is the ATP-grasp 1 domain. 3 residues coordinate Mg(2+): Q284, E298, and N300. Mn(2+) contacts are provided by Q284, E298, and N300. The segment at 402 to 546 (YGVHHLGLPN…YGTYETENES (145 aa)) is oligomerization domain. A carbamoyl phosphate synthetic domain region spans residues 547–929 (IITDKEKILV…ALFKGLTGSG (383 aa)). Residues 671–861 (EALLRKINVP…MAQLAMRAII (191 aa)) form the ATP-grasp 2 domain. Positions 707, 746, 748, 752, 777, 778, 779, 780, 820, and 832 each coordinate ATP. Positions 820, 832, and 834 each coordinate Mg(2+). Mn(2+) contacts are provided by Q820, E832, and N834. Positions 930–1057 (VEVKDHGTVL…ESMTFTMRQM (128 aa)) constitute an MGS-like domain. The tract at residues 930 to 1057 (VEVKDHGTVL…ESMTFTMRQM (128 aa)) is allosteric domain.

It belongs to the CarB family. In terms of assembly, composed of two chains; the small (or glutamine) chain promotes the hydrolysis of glutamine to ammonia, which is used by the large (or ammonia) chain to synthesize carbamoyl phosphate. Tetramer of heterodimers (alpha,beta)4. The cofactor is Mg(2+). It depends on Mn(2+) as a cofactor.

It carries out the reaction hydrogencarbonate + L-glutamine + 2 ATP + H2O = carbamoyl phosphate + L-glutamate + 2 ADP + phosphate + 2 H(+). The catalysed reaction is hydrogencarbonate + NH4(+) + 2 ATP = carbamoyl phosphate + 2 ADP + phosphate + 2 H(+). It functions in the pathway amino-acid biosynthesis; L-arginine biosynthesis; carbamoyl phosphate from bicarbonate: step 1/1. Its pathway is pyrimidine metabolism; UMP biosynthesis via de novo pathway; (S)-dihydroorotate from bicarbonate: step 1/3. Functionally, large subunit of the glutamine-dependent carbamoyl phosphate synthetase (CPSase). CPSase catalyzes the formation of carbamoyl phosphate from the ammonia moiety of glutamine, carbonate, and phosphate donated by ATP, constituting the first step of 2 biosynthetic pathways, one leading to arginine and/or urea and the other to pyrimidine nucleotides. The large subunit (synthetase) binds the substrates ammonia (free or transferred from glutamine from the small subunit), hydrogencarbonate and ATP and carries out an ATP-coupled ligase reaction, activating hydrogencarbonate by forming carboxy phosphate which reacts with ammonia to form carbamoyl phosphate. The chain is Carbamoyl phosphate synthase large chain from Staphylococcus aureus (strain bovine RF122 / ET3-1).